We begin with the raw amino-acid sequence, 770 residues long: Formate acetyltransferase (770 aa).

The region spanning 5 to 635 is the PFL domain; sequence NEMQKLAWAG…KTGNTPDGRR (631 aa). Residue Cys419 is the S-acetylcysteine intermediate of the active site. Cys420 serves as the catalytic Cysteine radical intermediate. Residues 642 to 770 form the Glycine radical domain; that stretch reads PGANPMHGRD…VITRTFTESM (129 aa). Position 745 is a glycine radical (Gly745).

The protein belongs to the glycyl radical enzyme (GRE) family. PFL subfamily. Homodimer.

The protein localises to the cytoplasm. The enzyme catalyses formate + acetyl-CoA = pyruvate + CoA. Its pathway is fermentation; pyruvate fermentation; formate from pyruvate: step 1/1. Its function is as follows. Catalyzes the conversion of pyruvate to formate and acetyl-CoA. The sequence is that of Formate acetyltransferase (pflB) from Haemophilus influenzae (strain ATCC 51907 / DSM 11121 / KW20 / Rd).